Consider the following 427-residue polypeptide: Trigger factor (427 aa).

The region spanning 163 to 248 (GDTVVIDFVG…VNEVKAKELP (86 aa)) is the PPIase FKBP-type domain.

Belongs to the FKBP-type PPIase family. Tig subfamily.

It localises to the cytoplasm. The catalysed reaction is [protein]-peptidylproline (omega=180) = [protein]-peptidylproline (omega=0). Functionally, involved in protein export. Acts as a chaperone by maintaining the newly synthesized protein in an open conformation. Functions as a peptidyl-prolyl cis-trans isomerase. This Lactococcus lactis subsp. lactis (strain IL1403) (Streptococcus lactis) protein is Trigger factor (tig).